The chain runs to 312 residues: Ornithine carbamoyltransferase (312 aa).

Residues Ser59–Thr62, Gln86, Arg110, and His137–Gln140 each bind carbamoyl phosphate. L-ornithine is bound by residues Asn167, Asp231, and Ser235 to Met236. Carbamoyl phosphate contacts are provided by Cys271 and Arg299.

It belongs to the aspartate/ornithine carbamoyltransferase superfamily. OTCase family.

It localises to the cytoplasm. The enzyme catalyses carbamoyl phosphate + L-ornithine = L-citrulline + phosphate + H(+). Its pathway is amino-acid biosynthesis; L-arginine biosynthesis; L-arginine from L-ornithine and carbamoyl phosphate: step 1/3. Reversibly catalyzes the transfer of the carbamoyl group from carbamoyl phosphate (CP) to the N(epsilon) atom of ornithine (ORN) to produce L-citrulline. This is Ornithine carbamoyltransferase from Methanopyrus kandleri (strain AV19 / DSM 6324 / JCM 9639 / NBRC 100938).